Consider the following 301-residue polypeptide: MHRHYNGLKTVLLLGGMWVVLLAIGWAIAGATRNSAFIMIFAVVGLLGTAYSYWNSDKLAIRSMRAVPVTPQQAPAMYRIVHELSQAAGQPMPRLFIAPTMSPNAFATGRNPEHAAVCCTEGILQLLDERELRGVLGHELMHVYNRDILTSSVAAAVAGIITSAAQMLQFAAIFGGGRGNDNRGGNPLVGLLLALLAPLAATVIQLAISRTREYDADEDGSKLTGDPLALASALRKIEGGASQFPMDPEDQKVVNTSHLMIANPFRGGAVTGLFRTHPATADRIARLENMARAGGGNPAGR.

2 consecutive transmembrane segments (helical) span residues 11–31 (VLLLGGMWVVLLAIGWAIAGA) and 34–54 (NSAFIMIFAVVGLLGTAYSYW). Histidine 138 is a Zn(2+) binding site. The active site involves glutamate 139. Histidine 142 lines the Zn(2+) pocket. 2 helical membrane passes run 154-174 (AAAVAGIITSAAQMLQFAAIF) and 188-208 (LVGLLLALLAPLAATVIQLAI). Glutamate 213 contacts Zn(2+).

It belongs to the peptidase M48B family. Zn(2+) serves as cofactor.

The protein localises to the cell membrane. This Kocuria rhizophila (strain ATCC 9341 / DSM 348 / NBRC 103217 / DC2201) protein is Protease HtpX homolog.